The following is a 724-amino-acid chain: Ribosomal RNA large subunit methyltransferase K/L (724 aa).

Residues 42–153 enclose the THUMP domain; it reads DAQRLVLWSR…KGRATLSVDL (112 aa).

Belongs to the methyltransferase superfamily. RlmKL family.

It is found in the cytoplasm. It catalyses the reaction guanosine(2445) in 23S rRNA + S-adenosyl-L-methionine = N(2)-methylguanosine(2445) in 23S rRNA + S-adenosyl-L-homocysteine + H(+). It carries out the reaction guanosine(2069) in 23S rRNA + S-adenosyl-L-methionine = N(2)-methylguanosine(2069) in 23S rRNA + S-adenosyl-L-homocysteine + H(+). Functionally, specifically methylates the guanine in position 2445 (m2G2445) and the guanine in position 2069 (m7G2069) of 23S rRNA. The sequence is that of Ribosomal RNA large subunit methyltransferase K/L from Xylella fastidiosa (strain M23).